The following is a 193-amino-acid chain: MRLCDRDIEAWLDNGKLGIDPRPPVERINGATVDVRLGNQFRTFRGHTAAFIDLSGPKAEVSAALDRVMSDEIVLPEGDAFFLHPGELALAVTLESVTLPDDLVGWLDGRSSLARLGLMVHVTAHRIDPGWQGRIVLEFYNSGKLPLALRPGMLIGALSFEPLSGPAARPYNSRQDAKYKGQQGAVASRIDKD.

DCTP contacts are provided by residues 110 to 115, Asp-128, 136 to 138, Tyr-171, Lys-178, and Gln-182; these read RSSLAR and VLE. Glu-138 (proton donor/acceptor) is an active-site residue. The interval 169–193 is disordered; that stretch reads RPYNSRQDAKYKGQQGAVASRIDKD.

Belongs to the dCTP deaminase family. In terms of assembly, homotrimer.

The catalysed reaction is dCTP + H2O + H(+) = dUTP + NH4(+). It functions in the pathway pyrimidine metabolism; dUMP biosynthesis; dUMP from dCTP (dUTP route): step 1/2. Catalyzes the deamination of dCTP to dUTP. The protein is dCTP deaminase of Erwinia tasmaniensis (strain DSM 17950 / CFBP 7177 / CIP 109463 / NCPPB 4357 / Et1/99).